A 270-amino-acid polypeptide reads, in one-letter code: ATP synthase subunit a (270 aa).

The next 5 membrane-spanning stretches (helical) occupy residues 38–58 (VHID…GIFY), 98–118 (IAPL…MDLV), 143–163 (DVNI…YYSI), 208–228 (LFGN…MLPW), and 239–259 (AIFH…LTIV).

It belongs to the ATPase A chain family. F-type ATPases have 2 components, CF(1) - the catalytic core - and CF(0) - the membrane proton channel. CF(1) has five subunits: alpha(3), beta(3), gamma(1), delta(1), epsilon(1). CF(0) has three main subunits: a(1), b(2) and c(9-12). The alpha and beta chains form an alternating ring which encloses part of the gamma chain. CF(1) is attached to CF(0) by a central stalk formed by the gamma and epsilon chains, while a peripheral stalk is formed by the delta and b chains.

The protein resides in the cell inner membrane. In terms of biological role, key component of the proton channel; it plays a direct role in the translocation of protons across the membrane. The chain is ATP synthase subunit a from Vibrio parahaemolyticus serotype O3:K6 (strain RIMD 2210633).